Consider the following 352-residue polypeptide: B1 bradykinin receptor (352 aa).

The Extracellular segment spans residues 1-41; that stretch reads MASWPPLELQSSNQSQLFPQNATACDNAPEAWDLLHRVLPT. Residues Asn-13 and Asn-21 are each glycosylated (N-linked (GlcNAc...) asparagine). The helical transmembrane segment at 42 to 62 threads the bilayer; sequence FIISICSFGLLGNLFVLLVFL. Residues 63–72 lie on the Cytoplasmic side of the membrane; that stretch reads LPRRRLNVAE. Residues 73 to 93 traverse the membrane as a helical segment; it reads IYLANLAASDLVFVLGLPFWA. Topologically, residues 94-110 are extracellular; sequence ENIWNQFNWPFGALLCR. Cys-109 and Cys-188 are disulfide-bonded. The chain crosses the membrane as a helical span at residues 111–131; that stretch reads VINGIIKANLFISIFLVVAIS. Residues 132-153 lie on the Cytoplasmic side of the membrane; sequence QDRYCVLVHPMASRRRQRRRQA. A helical membrane pass occupies residues 154 to 174; the sequence is RVTCVLIWVVGGLLSIPTFLL. Topologically, residues 175-206 are extracellular; that stretch reads RSIQAVPDLNITACILLLPHEAWHFARIVELN. An N-linked (GlcNAc...) asparagine glycan is attached at Asn-184. Residues 207–227 form a helical membrane-spanning segment; sequence ILAFLLPLAAIIFFNYHILAS. Topologically, residues 228–250 are cytoplasmic; it reads LRGREEVSRTRCGGSKDSKTTAL. The helical transmembrane segment at 251–271 threads the bilayer; the sequence is ILTLVVAFLVCWAPYHFFAFL. The Extracellular segment spans residues 272–294; sequence EFLFQVQAVRGCFWEDFIDLGLQ. The helical transmembrane segment at 295-315 threads the bilayer; the sequence is LANFLAFTNSSLNPVIYVFVG. Topologically, residues 316–352 are cytoplasmic; sequence RLFRTKVWELYKQCTPKSLAPISSSHRKEIFQLFWRN. Cys-329 is lipidated: S-palmitoyl cysteine.

The protein belongs to the G-protein coupled receptor 1 family. Bradykinin receptor subfamily. BDKRB1 sub-subfamily.

It is found in the cell membrane. This is a receptor for bradykinin. Could be a factor in chronic pain and inflammation. This is B1 bradykinin receptor (BDKRB1) from Macaca mulatta (Rhesus macaque).